The following is a 238-amino-acid chain: Probable transcriptional regulatory protein CAB166 (238 aa).

The protein belongs to the TACO1 family.

Its subcellular location is the cytoplasm. In Chlamydia abortus (strain DSM 27085 / S26/3) (Chlamydophila abortus), this protein is Probable transcriptional regulatory protein CAB166.